The following is a 71-amino-acid chain: Large ribosomal subunit protein bL31 (71 aa).

C16, C18, C37, and C40 together coordinate Zn(2+).

It belongs to the bacterial ribosomal protein bL31 family. Type A subfamily. In terms of assembly, part of the 50S ribosomal subunit. It depends on Zn(2+) as a cofactor.

In terms of biological role, binds the 23S rRNA. The polypeptide is Large ribosomal subunit protein bL31 (Solidesulfovibrio magneticus (strain ATCC 700980 / DSM 13731 / RS-1) (Desulfovibrio magneticus)).